A 123-amino-acid chain; its full sequence is uncharacterized protein (123 aa).

The signal sequence occupies residues 1-24; that stretch reads MLPLCLTFLSFFLSLGGSFKAVMT. The next 2 membrane-spanning stretches (helical) occupy residues 39–59 and 101–121; these read FWIF…ALAI and FGGI…ALTG.

The protein resides in the membrane. This is an uncharacterized protein from Saccharomyces cerevisiae (strain ATCC 204508 / S288c) (Baker's yeast).